The primary structure comprises 385 residues: Alanine--glyoxylate aminotransferase 1 (385 aa).

Lys-201 carries the N6-(pyridoxal phosphate)lysine modification. Substrate is bound at residue Arg-354.

Belongs to the class-V pyridoxal-phosphate-dependent aminotransferase family. Homodimer. Pyridoxal 5'-phosphate serves as cofactor.

It catalyses the reaction glyoxylate + L-alanine = glycine + pyruvate. It functions in the pathway amino-acid biosynthesis; glycine biosynthesis; glycine from glyoxylate: step 1/1. Its function is as follows. Has alanine:glyoxylate aminotransferase activity. The polypeptide is Alanine--glyoxylate aminotransferase 1 (Saccharomyces cerevisiae (strain ATCC 204508 / S288c) (Baker's yeast)).